Here is a 378-residue protein sequence, read N- to C-terminus: 3-ketosteroid-9-alpha-monooxygenase, oxygenase component (378 aa).

In terms of domain architecture, Rieske spans 26–128; the sequence is WHCIGLAKDF…TMERNGVLFV (103 aa). Positions 67, 69, 86, and 89 each coordinate [2Fe-2S] cluster. Residues Asn175, His181, His186, and Asp305 each contribute to the Fe cation site.

Homotrimer. The two-component system 3-ketosteroid-9-alpha-monooxygenase is composed of an oxygenase component KshA and a reductase component KshB. [2Fe-2S] cluster serves as cofactor. Requires Fe cation as cofactor.

It carries out the reaction androsta-1,4-diene-3,17-dione + 2 reduced [2Fe-2S]-[ferredoxin] + O2 + 2 H(+) = 9alpha-hydroxyandrosta-1,4-diene-3,17-dione + 2 oxidized [2Fe-2S]-[ferredoxin] + H2O. Its activity is regulated as follows. KSH activity is completely inhibited by zinc ions. KshA is specifically inhibited by Fe(3+), Co(2+), Zn(2+) and Ni(2+) ions. Functionally, in vitro, catalyzes the introduction of a 9alpha-hydroxyl moiety into the ring B of 3-ketosteroid substrates such as 1,4-androstadiene-3,17-dione (ADD), 4-androstene-3,17-dione (AD), 4-androstene-17beta-ol-3-one (testosterone), 4-pregnene-3,20-dione (progesterone), 19-nor-4-androstene-3,17-dione (nordion), 1-(5alpha)-androstene-3,17-dione, 5alpha-androstane-3,17-dione and 5beta-androstane-3,17-dione. KSH has the highest activity with 3-keto-delta4 steroid substrates. This is 3-ketosteroid-9-alpha-monooxygenase, oxygenase component from Rhodococcus rhodochrous.